The sequence spans 329 residues: Probable cell division protein WhiA (329 aa).

A DNA-binding region (H-T-H motif) is located at residues 276 to 309 (SLEELGKVHEPPLTKDAIAGRIRRLLALADKTAR). The disordered stretch occupies residues 308–329 (ARSNGEPTTLESLPVEMRDDRG). The span at 309–318 (RSNGEPTTLE) shows a compositional bias: polar residues.

Belongs to the WhiA family.

In terms of biological role, involved in cell division and chromosome segregation. The sequence is that of Probable cell division protein WhiA from Cutibacterium acnes (strain DSM 16379 / KPA171202) (Propionibacterium acnes).